Reading from the N-terminus, the 416-residue chain is 26S proteasome regulatory subunit 8 (416 aa).

The span at 1–18 (MAPPASTASSADPSKPTA) shows a compositional bias: low complexity. The disordered stretch occupies residues 1–29 (MAPPASTASSADPSKPTAQKLTEESDEKT). 200–207 (GPPGTGKT) serves as a coordination point for ATP.

Belongs to the AAA ATPase family. In terms of assembly, component of the 19S proteasome regulatory particle complex. The 26S proteasome consists of a 20S core particle (CP) and two 19S regulatory subunits (RP). Interacts with elt-2.

It localises to the cytoplasm. Its subcellular location is the nucleus. Component of the 26S proteasome, a multiprotein complex involved in the ATP-dependent degradation of ubiquitinated proteins. This complex plays a key role in the maintenance of protein homeostasis by removing misfolded or damaged proteins, which could impair cellular functions, and by removing proteins whose functions are no longer required. Therefore, the proteasome participates in numerous cellular processes, including cell cycle progression, apoptosis, or DNA damage repair. Belongs to the heterohexameric ring of AAA (ATPases associated with diverse cellular activities) proteins that unfolds ubiquitinated target proteins that are concurrently translocated into a proteolytic chamber and degraded into peptides. In addition, regulates gene expression in response to bacterial infection. Binds to the GATA transcription factor elt-2 to control its transcriptional activity and thus the expression of elt-2-dependent genes in response to infection by Gram-negative bacteria such as P.aeruginosa. The chain is 26S proteasome regulatory subunit 8 from Caenorhabditis elegans.